Consider the following 374-residue polypeptide: MARDYYDILGVSRDAGQEDLKQAYRRLARKYHPDVNKEAGAEERFKEINRAYEVLSDPETRARYDRFGEAGVSGAAAGYGDMGDMGGFADIFESIFSGFGGVGAGTSRRRTGPSRGDDLRFDLKLEFREAIFGGEKQIRITHLETCTTCNGSGAKPGTKPRTCGTCGGAGQVRRATRTPFGSFTQVSVCPTCNGKGQVIEDKCETCGGNGQAQVTKKLKITIPAGVDTGTRLRVSNEGDAGQQGGPAGDLYVYLFVQEDPEFRREGINILSEVKISYLQAILGSRLMVNTVDGEVELTIPPGTQPNTVLTLENHGVPRLGNPVSRGDHLITVLLEIPTRISAEERELLEKLAKIRGDRIGKGGIEGFFGKVFGG.

The J domain occupies aspartate 4–glycine 68. A CR-type zinc finger spans residues glycine 133–threonine 215. Residues cysteine 146, cysteine 149, cysteine 163, cysteine 166, cysteine 189, cysteine 192, cysteine 203, and cysteine 206 each contribute to the Zn(2+) site. 4 CXXCXGXG motif repeats span residues cysteine 146–glycine 153, cysteine 163–glycine 170, cysteine 189–glycine 196, and cysteine 203–glycine 210.

It belongs to the DnaJ family. As to quaternary structure, homodimer. Zn(2+) serves as cofactor.

It localises to the cytoplasm. Functionally, participates actively in the response to hyperosmotic and heat shock by preventing the aggregation of stress-denatured proteins and by disaggregating proteins, also in an autonomous, DnaK-independent fashion. Unfolded proteins bind initially to DnaJ; upon interaction with the DnaJ-bound protein, DnaK hydrolyzes its bound ATP, resulting in the formation of a stable complex. GrpE releases ADP from DnaK; ATP binding to DnaK triggers the release of the substrate protein, thus completing the reaction cycle. Several rounds of ATP-dependent interactions between DnaJ, DnaK and GrpE are required for fully efficient folding. Also involved, together with DnaK and GrpE, in the DNA replication of plasmids through activation of initiation proteins. This Cyanothece sp. (strain PCC 7425 / ATCC 29141) protein is Chaperone protein DnaJ.